The chain runs to 291 residues: G1/S-specific cyclin-D2 (291 aa).

The segment at 261-291 (TRQQTQQRNSSKSVDELDQASTPTDVQDINL) is disordered. A compositionally biased stretch (polar residues) spans 279–291 (QASTPTDVQDINL). Position 282 is a phosphothreonine (T282).

This sequence belongs to the cyclin family. Cyclin D subfamily. In terms of assembly, interacts with the cdk4 and cdk6 protein kinases to form a serine/threonine kinase holoenzyme complex. The cyclin subunit imparts substrate specificity to the complex. Phosphorylation at Thr-282 by MAP kinases is required for ubiquitination and degradation by the DCX(AMBRA1) complex. Post-translationally, ubiquitinated by the DCX(AMBRA1) complex during the transition from G1 to S cell phase, leading to its degradation: ubiquitination is dependent on Thr-282 phosphorylation. The DCX(AMBRA1) complex represents the major regulator of CCND2 stability during the G1/S transition.

Its subcellular location is the nucleus. The protein localises to the cytoplasm. It localises to the nucleus membrane. Regulatory component of the cyclin D2-CDK4 (DC) complex that phosphorylates and inhibits members of the retinoblastoma (RB) protein family including RB1 and regulates the cell-cycle during G(1)/S transition. Phosphorylation of RB1 allows dissociation of the transcription factor E2F from the RB/E2F complex and the subsequent transcription of E2F target genes which are responsible for the progression through the G(1) phase. Hypophosphorylates RB1 in early G(1) phase. Cyclin D-CDK4 complexes are major integrators of various mitogenenic and antimitogenic signals. The polypeptide is G1/S-specific cyclin-D2 (ccnd2) (Xenopus laevis (African clawed frog)).